The primary structure comprises 287 residues: Phosphatidylserine decarboxylase proenzyme (287 aa).

Catalysis depends on charge relay system; for autoendoproteolytic cleavage activity residues D90, H147, and S252. The Schiff-base intermediate with substrate; via pyruvic acid; for decarboxylase activity role is filled by S252. Pyruvic acid (Ser); by autocatalysis is present on S252.

This sequence belongs to the phosphatidylserine decarboxylase family. PSD-B subfamily. Prokaryotic type I sub-subfamily. As to quaternary structure, heterodimer of a large membrane-associated beta subunit and a small pyruvoyl-containing alpha subunit. It depends on pyruvate as a cofactor. In terms of processing, is synthesized initially as an inactive proenzyme. Formation of the active enzyme involves a self-maturation process in which the active site pyruvoyl group is generated from an internal serine residue via an autocatalytic post-translational modification. Two non-identical subunits are generated from the proenzyme in this reaction, and the pyruvate is formed at the N-terminus of the alpha chain, which is derived from the carboxyl end of the proenzyme. The autoendoproteolytic cleavage occurs by a canonical serine protease mechanism, in which the side chain hydroxyl group of the serine supplies its oxygen atom to form the C-terminus of the beta chain, while the remainder of the serine residue undergoes an oxidative deamination to produce ammonia and the pyruvoyl prosthetic group on the alpha chain. During this reaction, the Ser that is part of the protease active site of the proenzyme becomes the pyruvoyl prosthetic group, which constitutes an essential element of the active site of the mature decarboxylase.

It is found in the cell membrane. The enzyme catalyses a 1,2-diacyl-sn-glycero-3-phospho-L-serine + H(+) = a 1,2-diacyl-sn-glycero-3-phosphoethanolamine + CO2. It functions in the pathway phospholipid metabolism; phosphatidylethanolamine biosynthesis; phosphatidylethanolamine from CDP-diacylglycerol: step 2/2. In terms of biological role, catalyzes the formation of phosphatidylethanolamine (PtdEtn) from phosphatidylserine (PtdSer). The protein is Phosphatidylserine decarboxylase proenzyme of Pseudomonas putida (strain ATCC 47054 / DSM 6125 / CFBP 8728 / NCIMB 11950 / KT2440).